The primary structure comprises 158 residues: S-ribosylhomocysteine lyase (158 aa).

Residues His-54, His-58, and Cys-124 each contribute to the Fe cation site.

The protein belongs to the LuxS family. As to quaternary structure, homodimer. It depends on Fe cation as a cofactor.

It catalyses the reaction S-(5-deoxy-D-ribos-5-yl)-L-homocysteine = (S)-4,5-dihydroxypentane-2,3-dione + L-homocysteine. Functionally, involved in the synthesis of autoinducer 2 (AI-2) which is secreted by bacteria and is used to communicate both the cell density and the metabolic potential of the environment. The regulation of gene expression in response to changes in cell density is called quorum sensing. Catalyzes the transformation of S-ribosylhomocysteine (RHC) to homocysteine (HC) and 4,5-dihydroxy-2,3-pentadione (DPD). This is S-ribosylhomocysteine lyase from Limosilactobacillus reuteri (Lactobacillus reuteri).